A 116-amino-acid chain; its full sequence is Ribonuclease P protein component (116 aa).

Belongs to the RnpA family. In terms of assembly, consists of a catalytic RNA component (M1 or rnpB) and a protein subunit.

It catalyses the reaction Endonucleolytic cleavage of RNA, removing 5'-extranucleotides from tRNA precursor.. In terms of biological role, RNaseP catalyzes the removal of the 5'-leader sequence from pre-tRNA to produce the mature 5'-terminus. It can also cleave other RNA substrates such as 4.5S RNA. The protein component plays an auxiliary but essential role in vivo by binding to the 5'-leader sequence and broadening the substrate specificity of the ribozyme. The protein is Ribonuclease P protein component of Mycobacterium bovis (strain ATCC BAA-935 / AF2122/97).